A 134-amino-acid chain; its full sequence is Holo-[acyl-carrier-protein] synthase (134 aa).

Mg(2+) is bound by residues aspartate 8 and glutamate 57.

Belongs to the P-Pant transferase superfamily. AcpS family. Mg(2+) serves as cofactor.

The protein localises to the cytoplasm. The catalysed reaction is apo-[ACP] + CoA = holo-[ACP] + adenosine 3',5'-bisphosphate + H(+). In terms of biological role, transfers the 4'-phosphopantetheine moiety from coenzyme A to a Ser of acyl-carrier-protein. This chain is Holo-[acyl-carrier-protein] synthase, found in Agrobacterium fabrum (strain C58 / ATCC 33970) (Agrobacterium tumefaciens (strain C58)).